The primary structure comprises 207 residues: DNA-directed RNA polymerase subunit alpha (207 aa).

Belongs to the RNA polymerase alpha chain family. In terms of assembly, in plastids the minimal PEP RNA polymerase catalytic core is composed of four subunits: alpha, beta, beta', and beta''. When a (nuclear-encoded) sigma factor is associated with the core the holoenzyme is formed, which can initiate transcription.

Its subcellular location is the plastid. It localises to the chloroplast. It catalyses the reaction RNA(n) + a ribonucleoside 5'-triphosphate = RNA(n+1) + diphosphate. DNA-dependent RNA polymerase catalyzes the transcription of DNA into RNA using the four ribonucleoside triphosphates as substrates. This is DNA-directed RNA polymerase subunit alpha (rpoA) from Euglena anabaena (Euglenaria anabaena).